The primary structure comprises 454 residues: UDP-N-acetylmuramoylalanine--D-glutamate ligase (454 aa).

Residue 118–124 (GTNGKTT) coordinates ATP.

It belongs to the MurCDEF family.

Its subcellular location is the cytoplasm. The enzyme catalyses UDP-N-acetyl-alpha-D-muramoyl-L-alanine + D-glutamate + ATP = UDP-N-acetyl-alpha-D-muramoyl-L-alanyl-D-glutamate + ADP + phosphate + H(+). The protein operates within cell wall biogenesis; peptidoglycan biosynthesis. In terms of biological role, cell wall formation. Catalyzes the addition of glutamate to the nucleotide precursor UDP-N-acetylmuramoyl-L-alanine (UMA). This is UDP-N-acetylmuramoylalanine--D-glutamate ligase from Thermosynechococcus vestitus (strain NIES-2133 / IAM M-273 / BP-1).